Consider the following 359-residue polypeptide: Protein RecA (359 aa).

An ATP-binding site is contributed by 73–80; sequence GPESSGKT.

It belongs to the RecA family.

It localises to the cytoplasm. Functionally, can catalyze the hydrolysis of ATP in the presence of single-stranded DNA, the ATP-dependent uptake of single-stranded DNA by duplex DNA, and the ATP-dependent hybridization of homologous single-stranded DNAs. It interacts with LexA causing its activation and leading to its autocatalytic cleavage. The protein is Protein RecA of Desulfovibrio desulfuricans (strain ATCC 27774 / DSM 6949 / MB).